The sequence spans 63 residues: Small ribosomal subunit protein bS21 (63 aa).

This sequence belongs to the bacterial ribosomal protein bS21 family.

The chain is Small ribosomal subunit protein bS21 from Bacteroides fragilis (strain ATCC 25285 / DSM 2151 / CCUG 4856 / JCM 11019 / LMG 10263 / NCTC 9343 / Onslow / VPI 2553 / EN-2).